The chain runs to 283 residues: NFU1 iron-sulfur cluster scaffold homolog, mitochondrial (283 aa).

The N-terminal 30 residues, 1–30 (MSKFLSQAALNTLRNTRLGSRQLVRSFAGI), are a transit peptide targeting the mitochondrion. Residues 182-250 (IKELLDTRIR…IPEVESVEQV (69 aa)) are nifU. [4Fe-4S] cluster-binding residues include cysteine 219 and cysteine 222.

The protein belongs to the NifU family.

The protein localises to the mitochondrion. Its function is as follows. Molecular scaffold for [Fe-S] cluster assembly of mitochondrial iron-sulfur proteins. This chain is NFU1 iron-sulfur cluster scaffold homolog, mitochondrial, found in Drosophila yakuba (Fruit fly).